A 263-amino-acid polypeptide reads, in one-letter code: Small ribosomal subunit protein uS15m (263 aa).

The transit peptide at M1–K70 directs the protein to the mitochondrion. Residues E238–K251 are compositionally biased toward basic and acidic residues. Positions E238–A263 are disordered.

Belongs to the universal ribosomal protein uS15 family. In terms of assembly, component of the mitochondrial ribosome small subunit (28S) which comprises a 12S rRNA and about 30 distinct proteins.

It is found in the mitochondrion. The sequence is that of Small ribosomal subunit protein uS15m (mrps15) from Danio rerio (Zebrafish).